Here is a 534-residue protein sequence, read N- to C-terminus: Peptide chain release factor 3 (534 aa).

The region spanning 9 to 278 (ARRRTFAIIS…FFVEHAPSPQ (270 aa)) is the tr-type G domain. GTP is bound by residues 18–25 (SHPDAGKT), 86–90 (DTPGH), and 140–143 (NKLD).

Belongs to the TRAFAC class translation factor GTPase superfamily. Classic translation factor GTPase family. PrfC subfamily.

It is found in the cytoplasm. Its function is as follows. Increases the formation of ribosomal termination complexes and stimulates activities of RF-1 and RF-2. It binds guanine nucleotides and has strong preference for UGA stop codons. It may interact directly with the ribosome. The stimulation of RF-1 and RF-2 is significantly reduced by GTP and GDP, but not by GMP. The chain is Peptide chain release factor 3 from Xylella fastidiosa (strain M12).